The following is a 191-amino-acid chain: dCTP deaminase, dUMP-forming (191 aa).

DCTP is bound by residues 101 to 106 (KSSLGR), Asp119, 127 to 129 (TLE), Gln148, Tyr162, and Gln174. Residue Glu129 is the Proton donor/acceptor of the active site. The interval 163-191 (GSAKYGSRYQGQRGPTPSRSYQNFHRTPI) is disordered. The span at 171 to 191 (YQGQRGPTPSRSYQNFHRTPI) shows a compositional bias: polar residues.

It belongs to the dCTP deaminase family. As to quaternary structure, homotrimer.

The enzyme catalyses dCTP + 2 H2O = dUMP + NH4(+) + diphosphate. It functions in the pathway pyrimidine metabolism; dUMP biosynthesis; dUMP from dCTP: step 1/1. In terms of biological role, bifunctional enzyme that catalyzes both the deamination of dCTP to dUTP and the hydrolysis of dUTP to dUMP without releasing the toxic dUTP intermediate. In Nocardioides sp. (strain ATCC BAA-499 / JS614), this protein is dCTP deaminase, dUMP-forming.